Consider the following 237-residue polypeptide: Lysophospholipase-like protein 1 (237 aa).

Alanine 2 is modified (N-acetylalanine). Residues serine 124, aspartate 179, and histidine 211 each act as charge relay system in the active site.

It belongs to the AB hydrolase superfamily. AB hydrolase 2 family.

Its subcellular location is the cytoplasm. The protein resides in the cytosol. The catalysed reaction is S-hexadecanoyl-L-cysteinyl-[protein] + H2O = L-cysteinyl-[protein] + hexadecanoate + H(+). In terms of biological role, palmitoyl thioesterase that catalyzes depalmitoylation of CGAS and KCNMA1. Acts as a regulator of innate immunity by mediating depalmitoylation of CGAS, thereby preventing CGAS homodimerization and cyclic GMP-AMP synthase activity. Does not exhibit phospholipase nor triacylglycerol lipase activity, able to hydrolyze only short chain substrates due to its shallow active site. The chain is Lysophospholipase-like protein 1 from Pongo abelii (Sumatran orangutan).